Here is a 102-residue protein sequence, read N- to C-terminus: Monothiol glutaredoxin-S6 (102 aa).

Positions 1 to 101 (MESVRSLVED…AMLRRAGAIW (101 aa)) constitute a Glutaredoxin domain. Position 21 (Cys-21) interacts with [2Fe-2S] cluster.

This sequence belongs to the glutaredoxin family. CC-type subfamily.

The protein localises to the cytoplasm. May only reduce GSH-thiol disulfides, but not protein disulfides. The chain is Monothiol glutaredoxin-S6 (GRXS6) from Arabidopsis thaliana (Mouse-ear cress).